Here is an 80-residue protein sequence, read N- to C-terminus: Putative membrane protein insertion efficiency factor (80 aa).

The protein belongs to the UPF0161 family.

The protein resides in the cell membrane. Functionally, could be involved in insertion of integral membrane proteins into the membrane. The sequence is that of Putative membrane protein insertion efficiency factor from Limosilactobacillus fermentum (strain NBRC 3956 / LMG 18251) (Lactobacillus fermentum).